Reading from the N-terminus, the 319-residue chain is MRNIIKLALAGLLSVSTFAVAAESSPEALRIGYQKGSIGMVLAKSHQLLEKRYPESKISWVEFPAGPQMLEALNVGSIDLGSTGDIPPIFAQAAGADLVYVGVEPPKPKAEVILVAENSPIKTVADLKGHKVAFQKGSSSHNLLLRALRQAGLKFTDIQPTYLTPADARAAFQQGNVDAWAIWDPYYSAALLQGGVRVLKDGTDLNQTGSFYLAARPYAEKNGAFIQGVLATFSEADALTRSQREQSIALLAKTMGLPAPVIASYLDHRPPTTIKPVNAEVAALQQQTADLFYENRLVPKKVDIRQRIWQPTQLEGKQL.

Positions 1–21 (MRNIIKLALAGLLSVSTFAVA) are cleaved as a signal peptide.

The protein belongs to the bacterial solute-binding protein SsuA/TauA family.

Its subcellular location is the periplasm. Part of a binding-protein-dependent transport system for aliphatic sulfonates. Putative binding protein. The polypeptide is Putative aliphatic sulfonates-binding protein (ssuA) (Escherichia coli (strain K12)).